Consider the following 209-residue polypeptide: Chaperone protein TorD (209 aa).

This sequence belongs to the TorD/DmsD family. TorD subfamily.

The protein localises to the cytoplasm. In terms of biological role, involved in the biogenesis of TorA. Acts on TorA before the insertion of the molybdenum cofactor and, as a result, probably favors a conformation of the apoenzyme that is competent for acquiring the cofactor. The chain is Chaperone protein TorD from Shewanella baltica (strain OS155 / ATCC BAA-1091).